Consider the following 1368-residue polypeptide: Alpha-latrotoxin-Lg1a (1368 aa).

Residues 217 to 236 are helix H8 is the probable transmembrane region of the tetrameric pore inserted in the target cell membrane; sequence VLYAILYGTQTYVSVMFFLL. Cysteines 392 and 1044 form a disulfide. ANK repeat units follow at residues 469-500, 504-533, 538-568, 572-601, 605-635, 639-669, 674-704, 708-737, 741-770, 774-803, 807-837, 841-870, 874-903, 907-936, 953-981, 982-1011, 1013-1042, 1046-1075, 1079-1109, and 1115-1144; these read QGRT…DINQ, KGYT…SVNS, FLQT…NINE, DGFT…DVNV, KGLT…DINA, NNMT…NANA, GLLS…NYNL, GDIT…NINQ, EKYT…NLEA, TGAT…NWRE, NGQM…VLDI, NLDT…KVNT, KGQA…NVYI, DGLN…KFEW, ISHF…GHYS, ICSP…SVDG, KPDT…KVNH, NGMT…DFRR, LDAT…NINI, and NKET…DENI. The segment at 1174–1177 is furin-like endopeptidase recognition region; the sequence is KFRR. The propeptide occupies 1178-1368; sequence EYKSSNGEHD…GETLHLFHES (191 aa).

It belongs to the cationic peptide 01 (latrotoxin) family. 03 (alpha-latrotoxin) subfamily. Homotetramer in membranes. As to expression, expressed in venom gland, cephalothorax, and abdomen tissues from both males and females.

It is found in the secreted. The protein localises to the target cell membrane. Presynaptic neurotoxin that causes massive release of neurotransmitters from vertebrate (but not invertebrate) nerve terminals and endocrine cells via a complex mechanism involving activation of receptor(s) and toxin insertion into the plasma membrane with subsequent pore formation. Binds to neurexin-1-alpha (NRXN1) in a calcium dependent manner, adhesion G protein-coupled receptor L1 (ADGRL1, also termed latrophilin-1 and calcium-independent receptor of latrotoxin (CIRL)), and receptor-type tyrosine-protein phosphatase S (PTPRS), also termed PTP sigma. NRXN1 and PTPRS are suggested to provide a platform for binding and subsequent pore formation events. In contrast, binding to ADGRL1 does not involve oligomerization and channel formation, but direct downstream stimulation of the synaptic fusion machinery. In Latrodectus geometricus (Brown widow spider), this protein is Alpha-latrotoxin-Lg1a.